A 69-amino-acid chain; its full sequence is DNA gyrase inhibitor YacG (69 aa).

Residues Cys-7, Cys-10, Cys-26, and Cys-30 each contribute to the Zn(2+) site.

Belongs to the DNA gyrase inhibitor YacG family. As to quaternary structure, interacts with GyrB. The cofactor is Zn(2+).

In terms of biological role, inhibits all the catalytic activities of DNA gyrase by preventing its interaction with DNA. Acts by binding directly to the C-terminal domain of GyrB, which probably disrupts DNA binding by the gyrase. This chain is DNA gyrase inhibitor YacG, found in Shewanella sp. (strain ANA-3).